A 331-amino-acid polypeptide reads, in one-letter code: Ketol-acid reductoisomerase (NADP(+)) (331 aa).

The region spanning 2–182 (AQLFYDSDAD…GGTRAGILET (181 aa)) is the KARI N-terminal Rossmann domain. NADP(+) is bound by residues 25–28 (YGSQ), S51, S53, and 83–86 (DEFQ). The active site involves H108. G134 provides a ligand contact to NADP(+). Residues 183–328 (NFKEETETDL…KGLRSMFSWL (146 aa)) form the KARI C-terminal knotted domain. 4 residues coordinate Mg(2+): D191, E195, E227, and E231. S252 contacts substrate.

It belongs to the ketol-acid reductoisomerase family. The cofactor is Mg(2+).

The catalysed reaction is (2R)-2,3-dihydroxy-3-methylbutanoate + NADP(+) = (2S)-2-acetolactate + NADPH + H(+). It catalyses the reaction (2R,3R)-2,3-dihydroxy-3-methylpentanoate + NADP(+) = (S)-2-ethyl-2-hydroxy-3-oxobutanoate + NADPH + H(+). It functions in the pathway amino-acid biosynthesis; L-isoleucine biosynthesis; L-isoleucine from 2-oxobutanoate: step 2/4. Its pathway is amino-acid biosynthesis; L-valine biosynthesis; L-valine from pyruvate: step 2/4. Its function is as follows. Involved in the biosynthesis of branched-chain amino acids (BCAA). Catalyzes an alkyl-migration followed by a ketol-acid reduction of (S)-2-acetolactate (S2AL) to yield (R)-2,3-dihydroxy-isovalerate. In the isomerase reaction, S2AL is rearranged via a Mg-dependent methyl migration to produce 3-hydroxy-3-methyl-2-ketobutyrate (HMKB). In the reductase reaction, this 2-ketoacid undergoes a metal-dependent reduction by NADPH to yield (R)-2,3-dihydroxy-isovalerate. This is Ketol-acid reductoisomerase (NADP(+)) from Synechococcus sp. (strain CC9902).